Reading from the N-terminus, the 737-residue chain is Phosphoribosylformylglycinamidine synthase subunit PurL (737 aa).

His-50 is a catalytic residue. Residues Tyr-53 and Lys-92 each coordinate ATP. Glu-94 lines the Mg(2+) pocket. Substrate is bound by residues 95–98 and Arg-117; that span reads SHNH. His-96 functions as the Proton acceptor in the catalytic mechanism. A Mg(2+)-binding site is contributed by Asp-118. Residue Gln-241 participates in substrate binding. A Mg(2+)-binding site is contributed by Asp-269. 313-315 is a binding site for substrate; it reads ESQ. The ATP site is built by Asp-494 and Gly-531. Asn-532 provides a ligand contact to Mg(2+). Ser-534 contacts substrate.

The protein belongs to the FGAMS family. Monomer. Part of the FGAM synthase complex composed of 1 PurL, 1 PurQ and 2 PurS subunits.

The protein resides in the cytoplasm. The enzyme catalyses N(2)-formyl-N(1)-(5-phospho-beta-D-ribosyl)glycinamide + L-glutamine + ATP + H2O = 2-formamido-N(1)-(5-O-phospho-beta-D-ribosyl)acetamidine + L-glutamate + ADP + phosphate + H(+). It participates in purine metabolism; IMP biosynthesis via de novo pathway; 5-amino-1-(5-phospho-D-ribosyl)imidazole from N(2)-formyl-N(1)-(5-phospho-D-ribosyl)glycinamide: step 1/2. Part of the phosphoribosylformylglycinamidine synthase complex involved in the purines biosynthetic pathway. Catalyzes the ATP-dependent conversion of formylglycinamide ribonucleotide (FGAR) and glutamine to yield formylglycinamidine ribonucleotide (FGAM) and glutamate. The FGAM synthase complex is composed of three subunits. PurQ produces an ammonia molecule by converting glutamine to glutamate. PurL transfers the ammonia molecule to FGAR to form FGAM in an ATP-dependent manner. PurS interacts with PurQ and PurL and is thought to assist in the transfer of the ammonia molecule from PurQ to PurL. The polypeptide is Phosphoribosylformylglycinamidine synthase subunit PurL (Nitrobacter winogradskyi (strain ATCC 25391 / DSM 10237 / CIP 104748 / NCIMB 11846 / Nb-255)).